A 563-amino-acid polypeptide reads, in one-letter code: Arylsulfatase K (563 aa).

The signal sequence occupies residues 1-17 (MLLLLVSVIVALALVAP). Ca(2+) is bound by residues Asp-40 and Cys-80. The active-site Nucleophile is the Cys-80. A 3-oxoalanine (Cys) modification is found at Cys-80. An N-linked (GlcNAc...) asparagine glycan is attached at Asn-108. Lys-128 is a binding site for substrate. The N-linked (GlcNAc...) asparagine glycan is linked to Asn-191. His-249 lines the substrate pocket. A glycan (N-linked (GlcNAc...) asparagine) is linked at Asn-260. Residues Asp-311 and His-312 each coordinate Ca(2+). 3 N-linked (GlcNAc...) asparagine glycosylation sites follow: Asn-373, Asn-411, and Asn-496.

This sequence belongs to the sulfatase family. It depends on Ca(2+) as a cofactor. Post-translationally, the conversion to 3-oxoalanine (also known as C-formylglycine, FGly), of a serine or cysteine residue in prokaryotes and of a cysteine residue in eukaryotes, is critical for catalytic activity. In terms of processing, the 75-kDa precursor undergoes proteolytic processing to yield a 23 kDa form. N-glycosylated with both high mannose and complex type sugars.

It localises to the secreted. It is found in the lysosome. It carries out the reaction an aryl sulfate + H2O = a phenol + sulfate + H(+). It catalyses the reaction Hydrolysis of the 2-sulfate groups of the 2-O-sulfo-D-glucuronate residues of chondroitin sulfate, heparin and heparitin sulfate.. Functionally, catalyzes the hydrolysis of pseudosubstrates such as p-nitrocatechol sulfate and p-nitrophenyl sulfate. Catalyzes the hydrolysis of the 2-sulfate groups of the 2-O-sulfo-D-glucuronate residues of chondroitin sulfate, heparin and heparitin sulfate. Acts selectively on 2-sulfoglucuronate and lacks activity against 2-sulfoiduronate. The protein is Arylsulfatase K (Arsk) of Rattus norvegicus (Rat).